The primary structure comprises 775 residues: 1,4-alpha-glucan branching enzyme GlgB (775 aa).

Catalysis depends on D431, which acts as the Nucleophile. The Proton donor role is filled by E484.

The protein belongs to the glycosyl hydrolase 13 family. GlgB subfamily. As to quaternary structure, monomer.

The enzyme catalyses Transfers a segment of a (1-&gt;4)-alpha-D-glucan chain to a primary hydroxy group in a similar glucan chain.. It participates in glycan biosynthesis; glycogen biosynthesis. Catalyzes the formation of the alpha-1,6-glucosidic linkages in glycogen by scission of a 1,4-alpha-linked oligosaccharide from growing alpha-1,4-glucan chains and the subsequent attachment of the oligosaccharide to the alpha-1,6 position. The sequence is that of 1,4-alpha-glucan branching enzyme GlgB from Parasynechococcus marenigrum (strain WH8102).